We begin with the raw amino-acid sequence, 182 residues long: Large ribosomal subunit protein uL16 (182 aa).

Belongs to the universal ribosomal protein uL16 family.

The protein is Large ribosomal subunit protein uL16 of Pyrobaculum arsenaticum (strain DSM 13514 / JCM 11321 / PZ6).